An 85-amino-acid polypeptide reads, in one-letter code: Homeobox protein knotted-1-like 8 (85 aa).

One can recognise an ELK domain in the interval 1-21; the sequence is ELKHQLLRKYGGYLGGLRQEF. Residues 22 to 85 constitute a DNA-binding region (homeobox; TALE-type); it reads SKRKKKGKLP…NQRKRHWKPA (64 aa).

It belongs to the TALE/KNOX homeobox family. Strongly expressed in ear inflorescence primordia and shoot meristem. Weakly expressed in embryos. Absent from leaves.

Its subcellular location is the nucleus. In terms of biological role, probably binds to the DNA sequence 5'-TGAC-3'. This chain is Homeobox protein knotted-1-like 8 (KNOX8), found in Zea mays (Maize).